The following is a 498-amino-acid chain: Cytochrome P450 monooxygenase 110 (498 aa).

Residues 7-24 (YVFALLGILATLYFVRWS) traverse the membrane as a helical segment. N-linked (GlcNAc...) asparagine glycosylation occurs at asparagine 425. Cysteine 440 serves as a coordination point for heme.

The protein belongs to the cytochrome P450 family. It depends on heme as a cofactor.

The protein resides in the membrane. It functions in the pathway secondary metabolite biosynthesis. Its function is as follows. Cytochrome P450 monooxygenase that is able to use dehydroabietic acid and testosterone as substrates for oxidation, suggesting that the natural substrate(s) may be structurally related to steroid compounds. This Postia placenta (strain ATCC 44394 / Madison 698-R) (Brown rot fungus) protein is Cytochrome P450 monooxygenase 110.